Reading from the N-terminus, the 123-residue chain is UPF0102 protein Cbei_1183 (123 aa).

It belongs to the UPF0102 family.

The polypeptide is UPF0102 protein Cbei_1183 (Clostridium beijerinckii (strain ATCC 51743 / NCIMB 8052) (Clostridium acetobutylicum)).